Reading from the N-terminus, the 714-residue chain is Methyl-accepting chemotaxis protein TlpQ (714 aa).

A helical membrane pass occupies residues 12 to 32; sequence ITLLAGLCLLGVVALLVGLSV. The 241-residue stretch at 50–290 folds into the Cache domain; sequence LDESARLRLE…LLGKNLAKAD (241 aa). Histamine contacts are provided by residues Glu-170, 208-210, and Asp-239; that span reads YFD. A helical membrane pass occupies residues 360 to 380; that stretch reads TWVELGLGLGAAVLGLLVLWL. Residues 383–437 form the HAMP domain; it reads RGVTRPILGVAHMLRDIASGEGDLTQRLPHTGRDELGELAGWFNRFLDKLQPIIR. The Methyl-accepting transducer domain occupies 442 to 678; sequence SVRDARSTAD…EINRNVAAIR (237 aa).

It belongs to the methyl-accepting chemotaxis (MCP) protein family. As to quaternary structure, homotetramer.

The protein localises to the cell membrane. Functionally, chemotactic-signal transducers respond to changes in the concentration of attractants and repellents in the environment, transduce a signal from the outside to the inside of the cell, and facilitate sensory adaptation through the variation of the level of methylation. TlpQ is a chemoreceptor that binds and mediates chemotaxis to histamine, a key biological signaling molecule. It binds histamine with high affinity, which permits responses to very low histamine concentrations. Chemotaxis to histamine may play a role in the virulence of P.aeruginosa by recruiting cells at the infection site and consequently modulating the expression of quorum-sensing-dependent virulence genes. TlpQ also binds and mediates chemotaxis to polyamines such as putrescine, spermidine, cadaverine, agmatine and ethylenediamine. In addition, binds the quorum-sensing signal autoinducer 2 (AI-2), thus inducing chemotaxis toward AI-2 and biofilm formation. The polypeptide is Methyl-accepting chemotaxis protein TlpQ (Pseudomonas aeruginosa (strain ATCC 15692 / DSM 22644 / CIP 104116 / JCM 14847 / LMG 12228 / 1C / PRS 101 / PAO1)).